A 164-amino-acid chain; its full sequence is MVDDSTRKTLSNIPLLQIRAGPREKDVWVQRLKEEYQALIKYVENNKQSGSDWFRLESNKEGTKWFGKCWYMHNLLKYEFDVEFDIPVTYPTTAPEIALPELDGKTAKMYRGGKICLTDHFKPLWARNVPKFGIAHAMALGLAPWLAVEIPDLIEKGIITYKEK.

Catalysis depends on Cys-116, which acts as the Glycyl thioester intermediate.

This sequence belongs to the ubiquitin-conjugating enzyme family. UFC1 subfamily.

In terms of biological role, E2-like enzyme which forms an intermediate with UFM1 via a thioester linkage. This chain is Ubiquitin-fold modifier-conjugating enzyme 1, found in Drosophila erecta (Fruit fly).